The following is a 477-amino-acid chain: Bifunctional protein HldE (477 aa).

Residues 1–318 are ribokinase; the sequence is MKVTLPEFER…ENAVRGRADT (318 aa). An N6-acetyllysine modification is found at Lys-179. 195–198 provides a ligand contact to ATP; sequence NLSE. The active site involves Asp-264. A cytidylyltransferase region spans residues 344 to 477; that stretch reads MTNGVFDILH…IKKIQQDKKG (134 aa).

The protein in the N-terminal section; belongs to the carbohydrate kinase PfkB family. In the C-terminal section; belongs to the cytidylyltransferase family. In terms of assembly, homodimer.

It catalyses the reaction D-glycero-beta-D-manno-heptose 7-phosphate + ATP = D-glycero-beta-D-manno-heptose 1,7-bisphosphate + ADP + H(+). The catalysed reaction is D-glycero-beta-D-manno-heptose 1-phosphate + ATP + H(+) = ADP-D-glycero-beta-D-manno-heptose + diphosphate. It participates in nucleotide-sugar biosynthesis; ADP-L-glycero-beta-D-manno-heptose biosynthesis; ADP-L-glycero-beta-D-manno-heptose from D-glycero-beta-D-manno-heptose 7-phosphate: step 1/4. Its pathway is nucleotide-sugar biosynthesis; ADP-L-glycero-beta-D-manno-heptose biosynthesis; ADP-L-glycero-beta-D-manno-heptose from D-glycero-beta-D-manno-heptose 7-phosphate: step 3/4. Its function is as follows. Catalyzes the phosphorylation of D-glycero-D-manno-heptose 7-phosphate at the C-1 position to selectively form D-glycero-beta-D-manno-heptose-1,7-bisphosphate. In terms of biological role, catalyzes the ADP transfer from ATP to D-glycero-beta-D-manno-heptose 1-phosphate, yielding ADP-D-glycero-beta-D-manno-heptose. This is Bifunctional protein HldE from Escherichia coli O9:H4 (strain HS).